A 748-amino-acid polypeptide reads, in one-letter code: Disintegrin and metalloproteinase domain-containing protein 10 (748 aa).

The N-terminal stretch at 1 to 19 is a signal peptide; it reads MVLLRVLILLLSWAAGMGG. The propeptide occupies 20 to 213; the sequence is QYGNPLNKYI…NGPELLRKKR (194 aa). Residues 20-672 are Extracellular-facing; it reads QYGNPLNKYI…SPELYENIAE (653 aa). Residues 171–178 carry the Cysteine switch motif; sequence GGCADHSV. Zn(2+) is bound at residue C173. A Peptidase M12B domain is found at 220–456; that stretch reads NTCQLYIQTD…KRNNCFVESG (237 aa). Cystine bridges form between C222–C313, C344–C451, C399–C435, C460–C495, C471–C484, C473–C479, C483–C515, C503–C511, C510–C536, C524–C543, C530–C562, C555–C567, C572–C598, C580–C607, C582–C597, C594–C639, and C632–C645. Residues N267 and N278 are each glycosylated (N-linked (GlcNAc...) asparagine). Residue H383 participates in Zn(2+) binding. E384 is a catalytic residue. Zn(2+)-binding residues include H387 and H393. N-linked (GlcNAc...) asparagine glycosylation is present at N439. A Disintegrin domain is found at 457 to 551; sequence QPICGNGMVE…LCPASDPKPN (95 aa). An N-linked (GlcNAc...) asparagine glycan is attached at N551. Residues 673 to 693 form a helical membrane-spanning segment; it reads WIVAHWWAVLLMGIALIMLMA. Over 694–748 the chain is Cytoplasmic; that stretch reads GFIKICSVHTPSSNPKLPPPKPLPGTLKRRRPPQPIQQPQRQRPRESYQMGHMRR. The segment at 704–748 is disordered; that stretch reads PSSNPKLPPPKPLPGTLKRRRPPQPIQQPQRQRPRESYQMGHMRR. An SH3-binding motif is present at residues 708–715; the sequence is PKLPPPKP. Phosphothreonine; by FAM20C is present on T719. The SH3-binding motif lies at 722-728; that stretch reads RRRPPQP. Residues 734-748 are interaction with AP2A1, AP2A2 and AP2M1; sequence RQRPRESYQMGHMRR.

As to quaternary structure, forms a ternary EFNA5-EPHA3-ADAM10 complex mediating EFNA5 extracellular domain shedding by ADAM10 which regulates the EFNA5-EPHA3 complex internalization and function, the cleavage occurs in trans, with ADAM10 and its substrate being on the membranes of opposing cells. Interacts with the clathrin adapter AP2 complex subunits AP2A1, AP2A2, AP2B1, and AP2M1; this interaction facilitates ADAM10 endocytosis from the plasma membrane during long-term potentiation in hippocampal neurons. Forms a ternary complex composed of ADAM10, EPHA4 and CADH1; within the complex, ADAM10 cleaves CADH1 which disrupts adherens junctions. Interacts with EPHA2. Interacts with NGF in a divalent cation-dependent manner. Interacts with TSPAN14; the interaction promotes ADAM10 maturation and cell surface expression. Interacts with TSPAN5, TSPAN10, TSPAN14, TSPAN15, TSPAN17 and TSPAN33; these interactions regulate ADAM10 substrate specificity, endocytosis and turnover. Interacts (via extracellular domain) with TSPAN33 (via extracellular domain) and (via cytoplasmic domain) with AFDN; interaction with TSPAN33 allows the docking of ADAM10 to zonula adherens through a PDZ11-dependent interaction between TSPAN33 and PLEKHA7 while interaction with AFDN locks ADAM10 at zonula adherens. Interacts with DLG1; this interaction recruits ADAM10 to the cell membrane during long-term depression in hippocampal neurons. Interacts (via extracellular domain) with BACE1 (via extracellular domain). Interacts with FAM171A1. (Microbial infection) Interacts with S.aureus hly; this interaction is necessary for toxin pore formation, disruption of focal adhesions and S.aureus hly-mediated cytotoxicity. Zn(2+) is required as a cofactor. Post-translationally, the precursor is cleaved by furin and PCSK7. In terms of tissue distribution, expressed in the brain (at protein level). Expressed in spleen, lymph node, thymus, peripheral blood leukocyte, bone marrow, cartilage, chondrocytes and fetal liver.

Its subcellular location is the cell membrane. The protein resides in the golgi apparatus membrane. It localises to the cytoplasmic vesicle. The protein localises to the clathrin-coated vesicle. It is found in the cell projection. Its subcellular location is the axon. The protein resides in the dendrite. It localises to the cell junction. The protein localises to the adherens junction. It is found in the cytoplasm. It catalyses the reaction Endopeptidase of broad specificity.. With respect to regulation, catalytically inactive when the propeptide is intact and associated with the mature enzyme. The disintegrin and cysteine-rich regions modulate access of substrates to exerts an inhibitory effect on the cleavage of ADAM10 substrates. In terms of biological role, transmembrane metalloprotease which mediates the ectodomain shedding of a myriad of transmembrane proteins, including adhesion proteins, growth factor precursors and cytokines being essential for development and tissue homeostasis. Associates with six members of the tetraspanin superfamily TspanC8 which regulate its exit from the endoplasmic reticulum and its substrate selectivity. Cleaves the membrane-bound precursor of TNF-alpha at '76-Ala-|-Val-77' to its mature soluble form. Responsible for the proteolytical release of soluble JAM3 from endothelial cells surface. Responsible for the proteolytic release of several other cell-surface proteins, including heparin-binding epidermal growth-like factor, ephrin-A2, CD44, CDH2 and for constitutive and regulated alpha-secretase cleavage of amyloid precursor protein (APP). Contributes to the normal cleavage of the cellular prion protein. Involved in the cleavage of the adhesion molecule L1 at the cell surface and in released membrane vesicles, suggesting a vesicle-based protease activity. Also controls the proteolytic processing of Notch and mediates lateral inhibition during neurogenesis. Required for the development of type 1 transitional B cells into marginal zone B cells, probably by cleaving Notch. Responsible for the FasL ectodomain shedding and for the generation of the remnant ADAM10-processed FasL (FasL APL) transmembrane form. Also cleaves the ectodomain of the integral membrane proteins CORIN and ITM2B. Mediates the proteolytic cleavage of LAG3, leading to release the secreted form of LAG3. Mediates the proteolytic cleavage of IL6R and IL11RA, leading to the release of secreted forms of IL6R and IL11RA. Enhances the cleavage of CHL1 by BACE1. Cleaves NRCAM. Cleaves TREM2, resulting in shedding of the TREM2 ectodomain. Involved in the development and maturation of glomerular and coronary vasculature. During development of the cochlear organ of Corti, promotes pillar cell separation by forming a ternary complex with CADH1 and EPHA4 and cleaving CADH1 at adherens junctions. May regulate the EFNA5-EPHA3 signaling. Regulates leukocyte transmigration as a sheddase for the adherens junction protein VE-cadherin/CDH5 in endothelial cells. (Microbial infection) Promotes the cytotoxic activity of S.aureus hly by binding to the toxin at zonula adherens and promoting formation of toxin pores. The chain is Disintegrin and metalloproteinase domain-containing protein 10 from Homo sapiens (Human).